The chain runs to 303 residues: 3-methyl-2-oxobutanoate hydroxymethyltransferase (303 aa).

The segment covering 1-10 (MDSSGTVRNQ) has biased composition (polar residues). The segment at 1–41 (MDSSGTVRNQTSDDHSRPADAAGTAATLYGAPAETRSPRRS) is disordered. Residues Asp84 and Asp123 each contribute to the Mg(2+) site. 3-methyl-2-oxobutanoate is bound by residues 84 to 85 (DS), Asp123, and Lys153. Glu155 contributes to the Mg(2+) binding site. The Proton acceptor role is filled by Glu221.

The protein belongs to the PanB family. In terms of assembly, homodecamer; pentamer of dimers. Requires Mg(2+) as cofactor.

The protein resides in the cytoplasm. The enzyme catalyses 3-methyl-2-oxobutanoate + (6R)-5,10-methylene-5,6,7,8-tetrahydrofolate + H2O = 2-dehydropantoate + (6S)-5,6,7,8-tetrahydrofolate. It functions in the pathway cofactor biosynthesis; (R)-pantothenate biosynthesis; (R)-pantoate from 3-methyl-2-oxobutanoate: step 1/2. Functionally, catalyzes the reversible reaction in which hydroxymethyl group from 5,10-methylenetetrahydrofolate is transferred onto alpha-ketoisovalerate to form ketopantoate. In Frankia alni (strain DSM 45986 / CECT 9034 / ACN14a), this protein is 3-methyl-2-oxobutanoate hydroxymethyltransferase.